A 404-amino-acid chain; its full sequence is MHHHHQQPSYGSGYPGQAYRQQQNPYPQYGHPSPQPYPPQNGYSHPSSGYPPSPAPPNGGQMYHGRQPSYPPNQYPPAHGGPTAPPTNPQAFGHGAPQGYNFQYSRCTGKRKALLIGINYFGQKGQLRGCINDVKNMSTYLNQNFGYAREDMVILTDDQQNPMSQPTKANILRAMHWLVKDAQPNDSLFFHYSGHGGQTPDLDGDEDDGYDEVIYPVDFRVAGHIVDDEMHRIMVKPLQPGVRLTAIFDSCHSGSALDLPYIYSTQGILKEPNLAKEAGQGLLGVISSYARGDMGGMMSTAVGFLKKAAKGDEAYQRTKQTKTSPADVIMWSGSKDDQTSQDAQIAGQATGAMSWAFITAMRKNPQQSYVQLLNSIRDELSTRYTQKPQLSSSHPLDVNLLYVM.

Residues 1-97 (MHHHHQQPSY…NPQAFGHGAP (97 aa)) are disordered. Catalysis depends on residues histidine 195 and cysteine 251.

It belongs to the peptidase C14B family.

Involved in cell death (apoptosis). The polypeptide is Metacaspase-1 (casA) (Emericella nidulans (strain FGSC A4 / ATCC 38163 / CBS 112.46 / NRRL 194 / M139) (Aspergillus nidulans)).